A 458-amino-acid chain; its full sequence is Elongation factor 1-alpha (458 aa).

Gly-2 is modified (n,N,N-trimethylglycine). Lys-3 carries the N6,N6-dimethyllysine; alternate modification. Lys-3 bears the N6-methyllysine; alternate mark. The region spanning 5-240 (KTHVNVVVIG…DAIEPPVRPS (236 aa)) is the tr-type G domain. Residues 14–21 (GHVDSGKS) are G1. 14 to 21 (GHVDSGKS) is a binding site for GTP. Lys-30 is subject to N6-methyllysine. A G2 region spans residues 70 to 74 (GITID). Lys-79 carries the post-translational modification N6,N6,N6-trimethyllysine. Residues 91-94 (DAPG) are G3. GTP-binding positions include 91 to 95 (DAPGH) and 153 to 156 (NKMD). The tract at residues 153–156 (NKMD) is G4. A G5 region spans residues 192–194 (SGW). Lys-316 carries the N6,N6-dimethyllysine; alternate modification. The residue at position 316 (Lys-316) is an N6-methyllysine; alternate. Position 390 is an N6-methyllysine (Lys-390).

It belongs to the TRAFAC class translation factor GTPase superfamily. Classic translation factor GTPase family. EF-Tu/EF-1A subfamily.

It localises to the cytoplasm. Its function is as follows. This protein promotes the GTP-dependent binding of aminoacyl-tRNA to the A-site of ribosomes during protein biosynthesis. The sequence is that of Elongation factor 1-alpha (TEF-1) from Mucor circinelloides f. lusitanicus (Mucor racemosus var. lusitanicus).